We begin with the raw amino-acid sequence, 594 residues long: Kelch domain-containing protein 7B (594 aa).

The tract at residues 1 to 174 (MVLRSHPFPR…PAGRSGALTE (174 aa)) is disordered. The segment covering 49–58 (IGTGTGGLVE) has biased composition (gly residues). A compositionally biased stretch (polar residues) spans 64-74 (QPRSSETNGSP). The span at 104-115 (PAQPPAQRPPGP) shows a compositional bias: pro residues. Residues 116-126 (AASSSARRSQP) show a composition bias toward low complexity. 5 Kelch repeats span residues 306 to 354 (EEPP…TMHN), 355 to 405 (YLFL…ALDG), 406 to 448 (LLYA…AVAC), 451 to 493 (DIYV…ALGG), and 495 to 538 (LYRF…TTLG).

The polypeptide is Kelch domain-containing protein 7B (KLHDC7B) (Homo sapiens (Human)).